A 106-amino-acid chain; its full sequence is Pyruvate decarboxylase 2 (106 aa).

The Mg(2+) site is built by Asn-10 and Gly-12.

This sequence belongs to the TPP enzyme family. As to quaternary structure, homotetramer. The cofactor is a metal cation. Requires thiamine diphosphate as cofactor.

It carries out the reaction a 2-oxocarboxylate + H(+) = an aldehyde + CO2. This chain is Pyruvate decarboxylase 2 (PDC2), found in Zea mays (Maize).